Reading from the N-terminus, the 720-residue chain is Inactive serine protease PAMR1 (720 aa).

The N-terminal stretch at 1–21 (MELGWWPQLGLAFLQLLLISS) is a signal peptide. 8 cysteine pairs are disulfide-bonded: Cys128-Cys150, Cys177-Cys199, Cys239-Cys250, Cys244-Cys260, Cys262-Cys271, Cys280-Cys329, Cys315-Cys342, and Cys414-Cys442. The 109-residue stretch at 128 to 236 (CGQVLRVPKG…DGFHAIFEEI (109 aa)) folds into the CUB domain. The 38-residue stretch at 235–272 (EITACSSSPCFHDGTCLLDSTGSYKCACLAGYTGKHCE) folds into the EGF-like domain. Sushi domains are found at residues 278–344 (RNCS…ICIK) and 387–444 (APTK…SCIP). One can recognise a Peptidase S1 domain in the interval 445–720 (ICGKTENVSA…FKDWIERNMK (276 aa)). N-linked (GlcNAc...) asparagine glycosylation occurs at Asn451. Intrachain disulfides connect Cys489–Cys505, Cys630–Cys649, and Cys661–Cys697.

This sequence belongs to the peptidase S1 family.

It localises to the secreted. Functionally, may play a role in regeneration of skeletal muscle. This is Inactive serine protease PAMR1 (PAMR1) from Bos taurus (Bovine).